The primary structure comprises 419 residues: Transcription regulator lscL (419 aa).

The segment at residues Arg-12–Cys-35 is a DNA-binding region (zn(2)-C6 fungal-type).

The protein localises to the nucleus. In terms of biological role, transcription factor that may coregulate the expression of the gene cluster that mediates the biosynthesis of the lipopeptide antibiotics leucinostatins that show extensive biological activities, including antimalarial, antiviral, antibacterial, antifungal, and antitumor activities, as well as phytotoxic. In Purpureocillium lilacinum (Paecilomyces lilacinus), this protein is Transcription regulator lscL.